Reading from the N-terminus, the 901-residue chain is Envelope glycoprotein B (901 aa).

Residues 1-34 (MRPVRGIARSRILSCSWRGTWTSALTILYLGVYC) form the signal peptide. Residues 35–736 (ESTTVTPTTV…GALVTFVTNP (702 aa)) are Virion surface-facing. 3 N-linked (GlcNAc...) asparagine; by host glycosylation sites follow: asparagine 53, asparagine 60, and asparagine 66. Intrachain disulfides connect cysteine 84/cysteine 533, cysteine 101/cysteine 489, cysteine 174/cysteine 239, and cysteine 331/cysteine 380. The involved in fusion and/or binding to host membrane stretch occupies residues 141 to 147 (SYKYVTY). Residue asparagine 197 is glycosylated (N-linked (GlcNAc...) asparagine; by host). Residues 226–233 (GSVWLYKE) form an involved in fusion and/or binding to host membrane region. 10 N-linked (GlcNAc...) asparagine; by host glycosylation sites follow: asparagine 270, asparagine 289, asparagine 328, asparagine 372, asparagine 398, asparagine 406, asparagine 436, asparagine 537, asparagine 571, and asparagine 623. Cysteines 559 and 596 form a disulfide. Hydrophobic membrane proximal region stretches follow at residues 683 to 734 (VERV…TFVT) and 714 to 734 (AVGAVGGAIGSFIGALVTFVT). A helical transmembrane segment spans residues 737–757 (FGAFVVFLFCVGCITLVITVY). Over 758–901 (RRQRRAMQRP…KLNTEDDVHV (144 aa)) the chain is Intravirion. Disordered regions lie at residues 794-813 (GPEGTSGDAPPPYPGEAPYG) and 852-901 (DDKK…DVHV). 2 stretches are compositionally biased toward basic and acidic residues: residues 852–864 (DDKKRQEIEKSSK) and 872–883 (SETRRRPGIMDR). The Internalization motif signature appears at 890-893 (YQKL).

It belongs to the herpesviridae glycoprotein B family. As to quaternary structure, homotrimer; disulfide-linked. Binds to heparan sulfate proteoglycans. Interacts with gH/gL heterodimer. A proteolytic cleavage by host furin generates two subunits that remain linked by disulfide bonds.

It localises to the virion membrane. The protein localises to the host cell membrane. Its subcellular location is the host endosome membrane. The protein resides in the host Golgi apparatus membrane. Envelope glycoprotein that forms spikes at the surface of virion envelope. Essential for the initial attachment to heparan sulfate moieties of the host cell surface proteoglycans. Involved in fusion of viral and cellular membranes leading to virus entry into the host cell. Following initial binding to its host receptors, membrane fusion is mediated by the fusion machinery composed at least of gB and the heterodimer gH/gL. May be involved in the fusion between the virion envelope and the outer nuclear membrane during virion egress. The chain is Envelope glycoprotein B from Guinea pig cytomegalovirus (strain 22122) (GPCMV).